The chain runs to 124 residues: MPTIQQLIRDEREKITKKTKSPALKNCPQRRGVCTRVYTTTPKKPNSALRKVARVRLTSGFEVTAYIPGIGHNLQEHSVVMIRGGRVKDLPGVRYHIIRGTLDTAGVKDRRQSRSKYGAKRPKA.

Asp-89 is modified (3-methylthioaspartic acid). The segment at 105–124 is disordered; sequence AGVKDRRQSRSKYGAKRPKA. Over residues 113–124 the composition is skewed to basic residues; it reads SRSKYGAKRPKA.

This sequence belongs to the universal ribosomal protein uS12 family. In terms of assembly, part of the 30S ribosomal subunit. Contacts proteins S8 and S17. May interact with IF1 in the 30S initiation complex.

Its function is as follows. With S4 and S5 plays an important role in translational accuracy. Functionally, interacts with and stabilizes bases of the 16S rRNA that are involved in tRNA selection in the A site and with the mRNA backbone. Located at the interface of the 30S and 50S subunits, it traverses the body of the 30S subunit contacting proteins on the other side and probably holding the rRNA structure together. The combined cluster of proteins S8, S12 and S17 appears to hold together the shoulder and platform of the 30S subunit. This chain is Small ribosomal subunit protein uS12 (rpsL), found in Synechococcus elongatus (strain ATCC 33912 / PCC 7942 / FACHB-805) (Anacystis nidulans R2).